The following is a 214-amino-acid chain: Histidine biosynthesis bifunctional protein HisIE (214 aa).

The segment at 1–114 is phosphoribosyl-AMP cyclohydrolase; sequence MDLSAVRFDE…LEGEKDLGFV (114 aa). Positions 115-214 are phosphoribosyl-ATP pyrophosphohydrolase; sequence VGQVYATIKE…RSPYDGSHGN (100 aa).

The protein in the N-terminal section; belongs to the PRA-CH family. In the C-terminal section; belongs to the PRA-PH family.

The protein resides in the cytoplasm. The catalysed reaction is 1-(5-phospho-beta-D-ribosyl)-ATP + H2O = 1-(5-phospho-beta-D-ribosyl)-5'-AMP + diphosphate + H(+). It carries out the reaction 1-(5-phospho-beta-D-ribosyl)-5'-AMP + H2O = 1-(5-phospho-beta-D-ribosyl)-5-[(5-phospho-beta-D-ribosylamino)methylideneamino]imidazole-4-carboxamide. It participates in amino-acid biosynthesis; L-histidine biosynthesis; L-histidine from 5-phospho-alpha-D-ribose 1-diphosphate: step 2/9. Its pathway is amino-acid biosynthesis; L-histidine biosynthesis; L-histidine from 5-phospho-alpha-D-ribose 1-diphosphate: step 3/9. The chain is Histidine biosynthesis bifunctional protein HisIE from Thermus thermophilus (strain ATCC BAA-163 / DSM 7039 / HB27).